The primary structure comprises 276 residues: Large ribosomal subunit protein uL2 (276 aa).

Residues 212-276 (NRHRGIRPQT…KLIISRKKHK (65 aa)) are disordered. The span at 257 to 276 (YKTRKKKASDKLIISRKKHK) shows a compositional bias: basic residues.

This sequence belongs to the universal ribosomal protein uL2 family. Part of the 50S ribosomal subunit. Forms a bridge to the 30S subunit in the 70S ribosome.

Its function is as follows. One of the primary rRNA binding proteins. Required for association of the 30S and 50S subunits to form the 70S ribosome, for tRNA binding and peptide bond formation. It has been suggested to have peptidyltransferase activity; this is somewhat controversial. Makes several contacts with the 16S rRNA in the 70S ribosome. In Helicobacter pylori (strain HPAG1), this protein is Large ribosomal subunit protein uL2.